Here is a 66-residue protein sequence, read N- to C-terminus: U10-theraphotoxin-Cg1a 3 (66 aa).

Positions Met-1–Ala-21 are cleaved as a signal peptide. A propeptide spanning residues Asp-22–Arg-29 is cleaved from the precursor. Intrachain disulfides connect Cys-31/Cys-46, Cys-38/Cys-51, and Cys-45/Cys-58.

This sequence belongs to the neurotoxin 10 (Hwtx-1) family. 29 (Jztx-13) subfamily. As to expression, expressed by the venom gland.

Its subcellular location is the secreted. Functionally, probable ion channel inhibitor. The sequence is that of U10-theraphotoxin-Cg1a 3 from Chilobrachys guangxiensis (Chinese earth tiger tarantula).